A 483-amino-acid chain; its full sequence is Low-density lipoprotein receptor-related protein 11 (483 aa).

The N-terminal stretch at 1–32 (MATRGGGPGPGFRHRALRGLLLLCLWLPGSRP) is a signal peptide. At 33-433 (GEPAAPSSGV…GGEHPAPEAG (401 aa)) the chain is on the extracellular side. The MANSC domain occupies 85–172 (AVPDTIIRTQ…FAPLRGYRTY (88 aa)). N152 and N275 each carry an N-linked (GlcNAc...) asparagine glycan. The region spanning 193–287 (PVSKAGKDVV…VTVLPRPYST (95 aa)) is the PKD domain. The LDL-receptor class A domain maps to 293–329 (ACSRYHFFCDSGCCIDIALACDGVRQCPDGSDEDFCQ). 3 cysteine pairs are disulfide-bonded: C294/C306, C301/C319, and C313/C328. Residues 346 to 428 (AQPGAMGLNE…KSGQAGGEHP (83 aa)) form a disordered region. Composition is skewed to polar residues over residues 367 to 376 (RATTHNQPAT) and 385 to 407 (HSTQ…SSGK). The N-linked (GlcNAc...) asparagine glycan is linked to N403. Residues 408-418 (NQEEGNYDLKS) are compositionally biased toward basic and acidic residues. Residues 434-456 (AVLPLALGLAITVLLLLMVTCRL) form a helical membrane-spanning segment. The Cytoplasmic segment spans residues 457-483 (RLVKQKLKKARPITSEESDYLINGMYL). Position 474 is a phosphoserine (S474).

The protein belongs to the LDLR family.

The protein resides in the membrane. This Mus musculus (Mouse) protein is Low-density lipoprotein receptor-related protein 11 (Lrp11).